We begin with the raw amino-acid sequence, 143 residues long: Large ribosomal subunit protein uL11 (143 aa).

Belongs to the universal ribosomal protein uL11 family. Part of the ribosomal stalk of the 50S ribosomal subunit. Interacts with L10 and the large rRNA to form the base of the stalk. L10 forms an elongated spine to which L12 dimers bind in a sequential fashion forming a multimeric L10(L12)X complex. In terms of processing, one or more lysine residues are methylated.

Functionally, forms part of the ribosomal stalk which helps the ribosome interact with GTP-bound translation factors. This is Large ribosomal subunit protein uL11 from Janthinobacterium sp. (strain Marseille) (Minibacterium massiliensis).